A 195-amino-acid polypeptide reads, in one-letter code: 4'-phosphopantetheinyl transferase AcpT (195 aa).

This sequence belongs to the P-Pant transferase superfamily. Gsp/Sfp/HetI/AcpT family.

The catalysed reaction is apo-[ACP] + CoA = holo-[ACP] + adenosine 3',5'-bisphosphate + H(+). May be involved in an alternative pathway for phosphopantetheinyl transfer and holo-ACP synthesis in E.coli. The native apo-protein substrate is unknown. Is able to functionally replace AcpS in vivo but only when expressed at high levels. This chain is 4'-phosphopantetheinyl transferase AcpT, found in Escherichia coli (strain K12).